Reading from the N-terminus, the 306-residue chain is Protein FAM228A (306 aa).

The disordered stretch occupies residues 237–277 (HASKLSQQNKGAEKKGLALGTRAQRPRSWAAADSPQGTPLV). Residue serine 270 is modified to Phosphoserine.

Belongs to the FAM228 family.

This is Protein FAM228A (Fam228a) from Rattus norvegicus (Rat).